The sequence spans 1450 residues: Arf-GAP with Rho-GAP domain, ANK repeat and PH domain-containing protein 1 (1450 aa).

The region spanning 6-70 is the SAM domain; the sequence is DAALSVAEWL…LAGLLRAHTS (65 aa). Residues 81 to 90 form a required for interaction with SH3KBP1 region; it reads PVPMKRHIFR. 2 disordered regions span residues 89–144 and 173–302; these read FRSP…LPPL and TKEE…SSLS. A compositionally biased stretch (pro residues) spans 92–102; sequence PPVPATPPEPL. Over residues 190–199 the composition is skewed to low complexity; the sequence is QSEEPLSTLP. Pro residues predominate over residues 200–219; that stretch reads QGPPQPPSPPPCPPEIPPKP. Acidic residues-rich tracts occupy residues 225 to 236 and 269 to 286; these read EFDDSDYDEVPE and EGEELSGDDQGDEEEDDH. At S229 the chain carries Phosphoserine. Phosphotyrosine; by PTK6 is present on Y231. Residues 327–419 enclose the PH 1 domain; it reads PVIKAGWLDK…WMQALQQAMA (93 aa). Position 354 is a phosphothreonine (T354). S428 bears the Phosphoserine mark. Y431 and Y504 each carry phosphotyrosine. One can recognise a PH 2 domain in the interval 440 to 529; the sequence is QPDRAGSLEL…WLEAMQGAIA (90 aa). The region spanning 535–660 is the Arf-GAP domain; sequence SEVAERIWAA…RYHPLFGNQE (126 aa). Residues 550-576 form a C4-type zinc finger; the sequence is CADCGAPQPDWASINLCVVICKRCAGE. S738 is modified (phosphoserine). The 108-residue stretch at 743 to 850 folds into the PH 3 domain; it reads TVSHSGFLYK…WVKCIAKAFV (108 aa). The Rho-GAP domain maps to 954 to 1139; it reads ASMGDTLSEQ…DLINHYVVVF (186 aa). The Ras-associating domain occupies 1172-1261; that stretch reads GDFICTVYLE…SHLVVKKHQA (90 aa). The 123-residue stretch at 1274–1396 folds into the PH 4 domain; that stretch reads GDTKHGMMKF…WFATFLFVQH (123 aa). Phosphoserine occurs at positions 1428 and 1435.

Interacts with SH3KBP1/CIN85 (via SH3 domains). The interaction is independent of EGF and does not affect ARAP1 GTPase-activating activity but is involved in regulating ubiquitination and endocytic trafficking of EGFR. ARAP1 competes with E3 ubiquitin-protein ligase CBL for binding to SH3KBP1, preventing interaction of CBL with SH3KBP1; this is likely to regulate SH3KBP1-mediated internalization of EGFR. Interacts with TNFRSF10A. In terms of processing, phosphorylated by PTK6 following EGF stimulation which enhances EGFR signaling by delaying EGFR down-regulation; the interaction is mediated by the SH2 domain of PTK6. Phosphorylation promotes association with the Golgi apparatus and endosomes. As to expression, detected in heart, skeletal muscle, spleen, kidney, liver, placenta, lung, peripheral blood leukocytes, adrenal gland, bone marrow, brain, lymph node, mammary gland, prostate, spinal cord, stomach, thyroid and trachea.

Its subcellular location is the cytoplasm. It localises to the golgi apparatus. The protein localises to the trans-Golgi network. It is found in the golgi stack. The protein resides in the cell membrane. Its subcellular location is the endosome. It localises to the multivesicular body. The protein localises to the cell projection. It is found in the ruffle. The protein resides in the podosome. Its subcellular location is the early endosome. Its function is as follows. Phosphatidylinositol 3,4,5-trisphosphate-dependent GTPase-activating protein that modulates actin cytoskeleton remodeling by regulating ARF and RHO family members. Activated by phosphatidylinositol 3,4,5-trisphosphate (PtdIns(3,4,5)P3) binding and, to a lesser extent, by phosphatidylinositol 3,4-bisphosphate (PtdIns(3,4)P2) binding. Has a preference for ARF1 and ARF5. Positively regulates the ring size of circular dorsal ruffles and promotes macropinocytosis. Acts as a bridging factor in osteoclasts to control actin and membrane dynamics. Regulates the condensing of osteoclast podosomes into sealing zones which segregate the bone-facing membrane from other membrane domains and are required for osteoclast resorption activity. Also regulates recruitment of the AP-3 complex to endosomal membranes and trafficking of lysosomal membrane proteins to the ruffled membrane border of osteoclasts to modulate bone resorption. Regulates the endocytic trafficking of EGFR. Regulates the incorporation of CD63 and CD9 into multivesicular bodies. Required in the retinal pigment epithelium (RPE) for photoreceptor survival due to its role in promoting RPE phagocytosis. This Homo sapiens (Human) protein is Arf-GAP with Rho-GAP domain, ANK repeat and PH domain-containing protein 1 (ARAP1).